Here is a 513-residue protein sequence, read N- to C-terminus: Serine/threonine-protein kinase pakH (513 aa).

The Protein kinase domain maps to 42-294 (FEIQEKLGEG…PSQLLDHPFI (253 aa)). Residues 48 to 56 (LGEGSFGSV) and Lys-71 each bind ATP. Asp-163 acts as the Proton acceptor in catalysis. Residues 313 to 358 (KSKKRKSIGPSVSPKQQPNDNNNNNNNNKPQFLSKLLNNNSNSSND) form a disordered region. The span at 331 to 357 (NDNNNNNNNNKPQFLSKLLNNNSNSSN) shows a compositional bias: low complexity. The chain crosses the membrane as a helical span at residues 493–512 (IVLYSTLGLILVLSVFFKFF).

Belongs to the protein kinase superfamily. STE Ser/Thr protein kinase family. STE20 subfamily. Mg(2+) serves as cofactor.

Its subcellular location is the membrane. It carries out the reaction L-seryl-[protein] + ATP = O-phospho-L-seryl-[protein] + ADP + H(+). The catalysed reaction is L-threonyl-[protein] + ATP = O-phospho-L-threonyl-[protein] + ADP + H(+). This is Serine/threonine-protein kinase pakH (pakH-1) from Dictyostelium discoideum (Social amoeba).